We begin with the raw amino-acid sequence, 285 residues long: Shikimate dehydrogenase (NADP(+)) (285 aa).

Shikimate contacts are provided by residues 20–22 (SRS) and T67. The active-site Proton acceptor is K71. Shikimate is bound by residues N93 and D108. NADP(+)-binding positions include 132–136 (GAGGA) and M224. A shikimate-binding site is contributed by Y226. Position 248 (G248) interacts with NADP(+).

This sequence belongs to the shikimate dehydrogenase family. Homodimer.

The catalysed reaction is shikimate + NADP(+) = 3-dehydroshikimate + NADPH + H(+). The protein operates within metabolic intermediate biosynthesis; chorismate biosynthesis; chorismate from D-erythrose 4-phosphate and phosphoenolpyruvate: step 4/7. In terms of biological role, involved in the biosynthesis of the chorismate, which leads to the biosynthesis of aromatic amino acids. Catalyzes the reversible NADPH linked reduction of 3-dehydroshikimate (DHSA) to yield shikimate (SA). The protein is Shikimate dehydrogenase (NADP(+)) of Bordetella avium (strain 197N).